A 35-amino-acid chain; its full sequence is Photosystem II reaction center protein T (35 aa).

The helical transmembrane segment at 3-23 (ALVYTFLLVSTLGIIFFAIFF) threads the bilayer.

The protein belongs to the PsbT family. As to quaternary structure, PSII is composed of 1 copy each of membrane proteins PsbA, PsbB, PsbC, PsbD, PsbE, PsbF, PsbH, PsbI, PsbJ, PsbK, PsbL, PsbM, PsbT, PsbY, PsbZ, Psb30/Ycf12, at least 3 peripheral proteins of the oxygen-evolving complex and a large number of cofactors. It forms dimeric complexes.

It is found in the plastid. It localises to the chloroplast thylakoid membrane. Functionally, found at the monomer-monomer interface of the photosystem II (PS II) dimer, plays a role in assembly and dimerization of PSII. PSII is a light-driven water plastoquinone oxidoreductase, using light energy to abstract electrons from H(2)O, generating a proton gradient subsequently used for ATP formation. The polypeptide is Photosystem II reaction center protein T (Nelumbo lutea (American lotus)).